A 292-amino-acid polypeptide reads, in one-letter code: Glutamate racemase (292 aa).

Residues 28 to 29 and 60 to 61 each bind substrate; these read DS and YG. The Proton donor/acceptor role is filled by cysteine 91. 92-93 is a binding site for substrate; that stretch reads NT. Cysteine 200 acts as the Proton donor/acceptor in catalysis. Position 201–202 (201–202) interacts with substrate; sequence TH.

The protein belongs to the aspartate/glutamate racemases family.

It catalyses the reaction L-glutamate = D-glutamate. Its pathway is cell wall biogenesis; peptidoglycan biosynthesis. In terms of biological role, provides the (R)-glutamate required for cell wall biosynthesis. The chain is Glutamate racemase from Trichormus variabilis (strain ATCC 29413 / PCC 7937) (Anabaena variabilis).